A 313-amino-acid polypeptide reads, in one-letter code: MREKDYVVIIGSANIDVAGYSHESLNYADSNPGKIKFTPGGVGRNIAQNLALLGNKAWLLSAVGSDFYGQSLLTQTNQSGVYVDKCLIVPGENTSSYLSLLDNTGEMLVAINDMNISNAITAEYLAQHGEFIQRAKVIVADCNISEEALAWILDNAANVPVFVDPVSAWKCVKVRDRLNQIHTLKPNRLEAETLSGIALSGREDVAKVAAWFHQHGLNRLVLSMGGDGVYYSDISGESGWSAPIKTNVINVTGAGDAMMAGLASCWVDGMPFAESVRFAQGCSSMALSCEYTNNPDLSIANVISLVENAECLN.

It belongs to the carbohydrate kinase PfkB family.

The catalysed reaction is pseudouridine + ATP = psi-UMP + ADP + H(+). Catalyzes the phosphorylation of pseudouridine to pseudouridine 5'-phosphate (PsiMP). In Escherichia coli (strain K12), this protein is Pseudouridine kinase (psuK).